The sequence spans 437 residues: Vacuolar protein sorting-associated protein 4A (437 aa).

An interaction with CHMP1B region spans residues 1-84 (MTTSTLQKAI…RSKEKHGKKP (84 aa)). Positions 2–80 (TTSTLQKAID…KDYLRSKEKH (79 aa)) constitute an MIT domain. Lysine 8 bears the N6-acetyllysine mark. Residues 75–106 (RSKEKHGKKPVKENQSEGKGSDSDSEGDNPEK) are disordered. Basic and acidic residues predominate over residues 84 to 96 (PVKENQSEGKGSD). 2 positions are modified to phosphoserine: serine 95 and serine 97. 167 to 174 (GPPGTGKS) contributes to the ATP binding site.

Belongs to the AAA ATPase family. Proposed to be monomeric or homodimeric in nucleotide-free form and to oligomerize upon binding to ATP to form two stacked hexameric or heptameric rings with a central pore through which ESCRT-III substrates are translocated in an ATP-dependent manner. Interacts with CHMP1A, CHMP1B, CHMP2A, CHMP2B, CHMP3, CHMP4A, CHMP4B, CHMP4C and CHMP6. Interacts with VPS4B; the interaction suggests a heteromeric assembly with VPS4B. Interacts with SPAST. Interacts with IST1. Interacts with ZFYVE19/ANCHR; leading to retain it at midbody. As to expression, ubiquitously expressed.

It is found in the late endosome membrane. Its subcellular location is the midbody. It localises to the cytoplasm. The protein resides in the cytoskeleton. The protein localises to the spindle. It carries out the reaction ATP + H2O = ADP + phosphate + H(+). In terms of biological role, involved in late steps of the endosomal multivesicular bodies (MVB) pathway. Recognizes membrane-associated ESCRT-III assemblies and catalyzes their disassembly, possibly in combination with membrane fission. Redistributes the ESCRT-III components to the cytoplasm for further rounds of MVB sorting. MVBs contain intraluminal vesicles (ILVs) that are generated by invagination and scission from the limiting membrane of the endosome and mostly are delivered to lysosomes enabling degradation of membrane proteins, such as stimulated growth factor receptors, lysosomal enzymes and lipids. It is required for proper accomplishment of various processes including the regulation of endosome size, primary cilium organization, mitotic spindle organization, chromosome segregation, and nuclear envelope sealing and spindle disassembly during anaphase. Involved in cytokinesis: retained at the midbody by ZFYVE19/ANCHR and CHMP4C until abscission checkpoint signaling is terminated at late cytokinesis. It is then released following dephosphorylation of CHMP4C, leading to abscission. VPS4A/B are required for the exosomal release of SDCBP, CD63 and syndecan. Critical for normal erythroblast cytokinesis and correct erythropoiesis. Functionally, (Microbial infection) In conjunction with the ESCRT machinery also appears to function in topologically equivalent membrane fission events, such as the terminal stages of cytokinesis and enveloped virus budding (HIV-1 and other lentiviruses). The protein is Vacuolar protein sorting-associated protein 4A of Homo sapiens (Human).